A 110-amino-acid chain; its full sequence is MNYANFGLDFLNSVANAAVEGKKLDLASRGLQLRSRALDTERDFNYAKLAFERHKFDTNNDLRIYGDAMRIQALRAAGLRINPYSNGRQIYQDEADLANLHSYYSFYKTD.

The protein belongs to the vesivirus VP2 protein family. As to quaternary structure, homooligomer. The portal-like structure consists in 12 copies of VP2. Interacts with capsid protein VP1.

Its subcellular location is the virion. It localises to the host cytoplasm. Minor structural protein that forms a portal-like structure at a unique three-fold axis of symmetry, following binding to the host receptor. The channel formed by VP2 may allow the delivery of the viral genome through the host endosomal membrane. The protein is Minor capsid protein VP2 of Vesicular exanthema of swine virus serotype A48 (isolate Swine/United States/A48/1948) (VESV).